The sequence spans 208 residues: Uracil phosphoribosyltransferase (208 aa).

5-phospho-alpha-D-ribose 1-diphosphate is bound by residues Arg78, Arg103, and 130–138; that span reads DPMLATGGS. Uracil contacts are provided by residues Ile193 and 198-200; that span reads GDA. 5-phospho-alpha-D-ribose 1-diphosphate is bound at residue Asp199.

The protein belongs to the UPRTase family. Requires Mg(2+) as cofactor.

It carries out the reaction UMP + diphosphate = 5-phospho-alpha-D-ribose 1-diphosphate + uracil. It participates in pyrimidine metabolism; UMP biosynthesis via salvage pathway; UMP from uracil: step 1/1. Its activity is regulated as follows. Allosterically activated by GTP. In terms of biological role, catalyzes the conversion of uracil and 5-phospho-alpha-D-ribose 1-diphosphate (PRPP) to UMP and diphosphate. This chain is Uracil phosphoribosyltransferase, found in Citrobacter koseri (strain ATCC BAA-895 / CDC 4225-83 / SGSC4696).